The sequence spans 257 residues: Short chain dehydrogenase prhI (257 aa).

Residues 7-29 form a helical membrane-spanning segment; the sequence is HVVIITGSSSGIGLAASTLALAS. Residue isoleucine 11 participates in NADP(+) binding. A glycan (N-linked (GlcNAc...) asparagine) is linked at asparagine 50. An NADP(+)-binding site is contributed by aspartate 57. Residues asparagine 92 and asparagine 110 are each glycosylated (N-linked (GlcNAc...) asparagine). NADP(+) contacts are provided by arginine 119, tyrosine 151, lysine 155, and valine 184. Tyrosine 151 (proton acceptor) is an active-site residue. Lysine 155 functions as the Lowers pKa of active site Tyr in the catalytic mechanism.

The protein belongs to the short-chain dehydrogenases/reductases (SDR) family.

It localises to the membrane. It carries out the reaction protoaustinoid A + A = protoaustinoid B + AH2. It functions in the pathway secondary metabolite biosynthesis; terpenoid biosynthesis. Functionally, short chain dehydrogenase; part of the gene cluster that mediates the biosynthesis of paraherquonin, a meroterpenoid with a unique, highly congested hexacyclic molecular architecture. The first step of the pathway is the synthesis of 3,5-dimethylorsellinic acid (DMOA) by the polyketide synthase prhL. Synthesis of DMOA is followed by farnesylation by the prenyltransferase prhE, methylesterification by the methyl-transferase prhM, epoxidation of the prenyl chain by the flavin-dependent monooxygenase prhF, and cyclization of the farnesyl moiety by the terpene cyclase prhH, to yield the tetracyclic intermediate, protoaustinoid A. The short chain dehydrogenase prhI then oxidizes the C-3 alcohol group of the terpene cyclase product to transform protoaustinoid A into protoaustinoid B. The FAD-binding monooxygenase prhJ catalyzes the oxidation of protoaustinoid B into preaustinoid A which is further oxidized into preaustinoid A1 by FAD-binding monooxygenase phrK. Finally, prhA leads to berkeleydione via the berkeleyone B intermediate. PrhA is a multifunctional dioxygenase that first desaturates at C5-C6 to form berkeleyone B, followed by rearrangement of the A/B-ring to form the cycloheptadiene moiety in berkeleydione. Berkeleydione serves as the key intermediate for the biosynthesis of paraherquonin as well as many other meroterpenoids. The cytochrome P450 monooxygenases prhB, prhD, and prhN, as well as the isomerase prhC, are probably involved in the late stage of paraherquonin biosynthesis, after the production of berkeleydione. Especially prhC might be a multifunctional enzyme that catalyzes the D-ring expansion via intramolecular methoxy rearrangement, as well as the hydrolysis of the expanded D-ring. The chain is Short chain dehydrogenase prhI from Penicillium brasilianum.